Here is a 98-residue protein sequence, read N- to C-terminus: Serine rich endogenous peptide 10 (98 aa).

A signal peptide spans 1 to 29; that stretch reads MERKKFSSKFIHLLIVFLLLCTFLSRTES. The disordered stretch occupies residues 50–98; it reads NSAIGTPSSTSDHAPGSNGRKLMSIYRPNGDIFTGPSGSGHGGGRTPAP. Residues 52–61 show a composition bias toward polar residues; the sequence is AIGTPSSTSD. 2 consecutive short sequence motifs (SCOOP motif) follow at residues 52–66 and 80–94; these read AIGT…APGS and DIFT…GGGR. 2 consecutive short sequence motifs (sxS motif essential for MIK2 binding) follow at residues 58–60 and 86–88; these read STS and SGS. The span at 86-98 shows a compositional bias: gly residues; sequence SGSGHGGGRTPAP.

Belongs to the serine rich endogenous peptide (SCOOP) phytocytokine family. As to quaternary structure, interacts with MIK2 (via extracellular leucine-rich repeat domain); this interaction triggers the formation of complex between MIK2 and the BAK1/SERK3 and SERK4 coreceptors, and subsequent BAK1 activation by phosphorylation. As to expression, mostly expressed in leaves and seedlings shoots, to a lower extent, in roots, but barely in flowers.

The protein resides in the cell membrane. The protein localises to the secreted. It localises to the extracellular space. It is found in the apoplast. Brassicaceae-specific phytocytokine (plant endogenous peptide released into the apoplast) perceived by MIK2 in a BAK1/SERK3 and SERK4 coreceptors-dependent manner, that modulates various physiological and antimicrobial processes including growth prevention and reactive oxygen species (ROS) response regulation. Inhibits root growth and regulates root meristems. Promotes ROS production and MAPK (e.g. MPK3, MPK4 and MPK6) activation in a MIK2-dependent manner, thus leading to the up-regulation of immune-related marker genes (e.g. WRKY30, WRKY33 and CYP81F2). This is Serine rich endogenous peptide 10 from Arabidopsis thaliana (Mouse-ear cress).